Here is a 231-residue protein sequence, read N- to C-terminus: Large ribosomal subunit protein uL1 (231 aa).

Belongs to the universal ribosomal protein uL1 family. As to quaternary structure, part of the 50S ribosomal subunit.

Functionally, binds directly to 23S rRNA. The L1 stalk is quite mobile in the ribosome, and is involved in E site tRNA release. In terms of biological role, protein L1 is also a translational repressor protein, it controls the translation of the L11 operon by binding to its mRNA. In Acetivibrio thermocellus (strain ATCC 27405 / DSM 1237 / JCM 9322 / NBRC 103400 / NCIMB 10682 / NRRL B-4536 / VPI 7372) (Clostridium thermocellum), this protein is Large ribosomal subunit protein uL1.